Consider the following 425-residue polypeptide: Dihydroorotase (425 aa).

Zn(2+) is bound by residues histidine 56 and histidine 58. Substrate is bound by residues 58-60 and asparagine 90; that span reads HYR. Aspartate 148, histidine 175, and histidine 228 together coordinate Zn(2+). Asparagine 274 contacts substrate. Aspartate 301 lines the Zn(2+) pocket. Aspartate 301 is a catalytic residue. Residues histidine 305 and 319–320 contribute to the substrate site; that span reads FG.

Belongs to the metallo-dependent hydrolases superfamily. DHOase family. Class I DHOase subfamily. Zn(2+) serves as cofactor.

The enzyme catalyses (S)-dihydroorotate + H2O = N-carbamoyl-L-aspartate + H(+). The protein operates within pyrimidine metabolism; UMP biosynthesis via de novo pathway; (S)-dihydroorotate from bicarbonate: step 3/3. Functionally, catalyzes the reversible cyclization of carbamoyl aspartate to dihydroorotate. This chain is Dihydroorotase, found in Lactobacillus gasseri (strain ATCC 33323 / DSM 20243 / BCRC 14619 / CIP 102991 / JCM 1131 / KCTC 3163 / NCIMB 11718 / NCTC 13722 / AM63).